The primary structure comprises 266 residues: Anamorsin homolog (266 aa).

Residues 1 to 164 (MIINFVGNTL…NITAENPDFL (164 aa)) form an N-terminal SAM-like domain region. Residues 165-185 (SNEDNDVSSDDEDLYNNEDDK) form a linker region. Residues cysteine 229, cysteine 232, cysteine 240, and cysteine 243 each contribute to the [4Fe-4S] cluster site. 2 short sequence motifs (cx2C motif) span residues 229–232 (CGNC) and 240–243 (CASC). The fe-S binding site B stretch occupies residues 229–243 (CGNCYLGDAFRCASC).

Belongs to the anamorsin family. In terms of assembly, monomer. [4Fe-4S] cluster serves as cofactor.

It is found in the cytoplasm. Its subcellular location is the mitochondrion intermembrane space. Its function is as follows. Component of the cytosolic iron-sulfur (Fe-S) protein assembly (CIA) machinery. Required for the maturation of extramitochondrial Fe-S proteins. Part of an electron transfer chain functioning in an early step of cytosolic Fe-S biogenesis, facilitating the de novo assembly of a [4Fe-4S] cluster on the cytosolic Fe-S scaffold complex. Electrons are transferred from NADPH via a FAD- and FMN-containing diflavin oxidoreductase. Together with the diflavin oxidoreductase, also required for the assembly of the diferric tyrosyl radical cofactor of ribonucleotide reductase (RNR), probably by providing electrons for reduction during radical cofactor maturation in the catalytic small subunit. This Plasmodium falciparum (isolate 3D7) protein is Anamorsin homolog.